The chain runs to 419 residues: MRVIVLGSGVIGVASAYYLAQQGAHVTVLDRQTGPAEETSFGNAGQISPGYSTPWAAPGIPFKAVKWMFQHHAPLAINLDGSMWQLQWMAQMLKNCNPQSYSQNKERMMRVAEYSRDCLKSLRETTGISYENRAKGTLQVFRKEAQLEAVQRDIEVLQECGVSYELLYQDDLARVEPALEHAKDKLVGGLHLPNDETGDCYLFTNALAQKAKELGVNFQFNQNVEGLVVEGDEIKGVRVNGQVLKADRYVLAFGSYSRDFLKPLALNLPVYPVKGYSLTIPIVQPEFAPQSTVLDETYKIAITRFDQRIRVGGMAELSGFNLGLNQDRRATLEMVTQDLFPGGNMAEASFWTGLRPMTPDSTPIIGATRFKNLFLNTGHGTLGWTMACGSGKLISDIVLSHQTEISTEGLSLQRYSTAA.

3–17 is a binding site for FAD; that stretch reads VIVLGSGVIGVASAY.

The protein belongs to the DadA oxidoreductase family. It depends on FAD as a cofactor.

The catalysed reaction is a D-alpha-amino acid + A + H2O = a 2-oxocarboxylate + AH2 + NH4(+). It participates in amino-acid degradation; D-alanine degradation; NH(3) and pyruvate from D-alanine: step 1/1. In terms of biological role, oxidative deamination of D-amino acids. The polypeptide is D-amino acid dehydrogenase (Acinetobacter baylyi (strain ATCC 33305 / BD413 / ADP1)).